Reading from the N-terminus, the 151-residue chain is Ribonuclease H (151 aa).

One can recognise an RNase H type-1 domain in the interval 1-141 (MKHVDIFTDG…ADELARKGME (141 aa)). Aspartate 9, glutamate 47, aspartate 69, and aspartate 133 together coordinate Mg(2+).

This sequence belongs to the RNase H family. In terms of assembly, monomer. Mg(2+) is required as a cofactor.

Its subcellular location is the cytoplasm. The catalysed reaction is Endonucleolytic cleavage to 5'-phosphomonoester.. Functionally, endonuclease that specifically degrades the RNA of RNA-DNA hybrids. The protein is Ribonuclease H of Rhizobium johnstonii (strain DSM 114642 / LMG 32736 / 3841) (Rhizobium leguminosarum bv. viciae).